A 117-amino-acid polypeptide reads, in one-letter code: EVKLLESGGPLVQLGGSLKLSCAASGFDFSRYWMSWVRQAPGKGLEWIGEIDPNSSTINYTPSLKDKFIISRNDAKNTLYLQMSKVRSEDTALYYCARSPYYAMNYWGQGTSVTVSS.

Positions 1–116 constitute an Ig-like domain; it reads EVKLLESGGP…WGQGTSVTVS (116 aa). Residues Cys22 and Cys96 are joined by a disulfide bond.

This Mus musculus (Mouse) protein is Ig heavy chain V region MOPC 173.